Consider the following 294-residue polypeptide: Fatty acyl-CoA reductase Rv0547c (294 aa).

NADP(+) is bound by residues serine 49, serine 50, isoleucine 52, arginine 72, aspartate 97, leucine 98, asparagine 124, tyrosine 192, lysine 196, valine 225, and threonine 227. The Proton acceptor role is filled by tyrosine 192.

It belongs to the short-chain dehydrogenases/reductases (SDR) family.

It is found in the host mitochondrion. It catalyses the reaction hexadecanal + NADP(+) + CoA = hexadecanoyl-CoA + NADPH + H(+). Its function is as follows. Oxidoreductase that promotes the persistence of M.tuberculosis in host macrophages by reprogramming the fatty acid metabolism in host mitochondria. When localized in the host mitochondria, it potentially acts on unknown lipid substrates and converts them into products that directly or indirectly alter the lipid profile of the mitochondria. This change in lipid profile results in increased mitochondrial membrane fluidity, enhanced endogenous fatty acid oxidation and increased mitochondrial spare respiratory capacity. All these events eventually favor M.tuberculosis persistence in the host macrophages. In vitro, can catalyze the NADPH-dependent reduction of palmitoyl-CoA (hexadecanoyl-CoA). This chain is Fatty acyl-CoA reductase Rv0547c, found in Mycobacterium tuberculosis (strain ATCC 25618 / H37Rv).